The following is a 305-amino-acid chain: tRNA dimethylallyltransferase (305 aa).

8-15 is a binding site for ATP; it reads GPTASGKT. 10 to 15 lines the substrate pocket; sequence TASGKT. The segment at 33–36 is interaction with substrate tRNA; sequence DSQQ.

This sequence belongs to the IPP transferase family. As to quaternary structure, monomer. Mg(2+) is required as a cofactor.

The enzyme catalyses adenosine(37) in tRNA + dimethylallyl diphosphate = N(6)-dimethylallyladenosine(37) in tRNA + diphosphate. In terms of biological role, catalyzes the transfer of a dimethylallyl group onto the adenine at position 37 in tRNAs that read codons beginning with uridine, leading to the formation of N6-(dimethylallyl)adenosine (i(6)A). The sequence is that of tRNA dimethylallyltransferase from Anaeromyxobacter dehalogenans (strain 2CP-1 / ATCC BAA-258).